Consider the following 217-residue polypeptide: Large ribosomal subunit protein uL3 (217 aa).

Belongs to the universal ribosomal protein uL3 family. In terms of assembly, part of the 50S ribosomal subunit. Forms a cluster with proteins L14 and L19.

One of the primary rRNA binding proteins, it binds directly near the 3'-end of the 23S rRNA, where it nucleates assembly of the 50S subunit. In Mycolicibacterium paratuberculosis (strain ATCC BAA-968 / K-10) (Mycobacterium paratuberculosis), this protein is Large ribosomal subunit protein uL3.